The following is a 484-amino-acid chain: Protein nucleotidyltransferase YdiU (484 aa).

ATP contacts are provided by G87, G89, R90, K110, D122, G123, R173, and R180. The active-site Proton acceptor is the D249. N250 and D259 together coordinate Mg(2+). Residue D259 coordinates ATP.

The protein belongs to the SELO family. Mg(2+) serves as cofactor. Requires Mn(2+) as cofactor.

It carries out the reaction L-seryl-[protein] + ATP = 3-O-(5'-adenylyl)-L-seryl-[protein] + diphosphate. The enzyme catalyses L-threonyl-[protein] + ATP = 3-O-(5'-adenylyl)-L-threonyl-[protein] + diphosphate. It catalyses the reaction L-tyrosyl-[protein] + ATP = O-(5'-adenylyl)-L-tyrosyl-[protein] + diphosphate. The catalysed reaction is L-histidyl-[protein] + UTP = N(tele)-(5'-uridylyl)-L-histidyl-[protein] + diphosphate. It carries out the reaction L-seryl-[protein] + UTP = O-(5'-uridylyl)-L-seryl-[protein] + diphosphate. The enzyme catalyses L-tyrosyl-[protein] + UTP = O-(5'-uridylyl)-L-tyrosyl-[protein] + diphosphate. Its function is as follows. Nucleotidyltransferase involved in the post-translational modification of proteins. It can catalyze the addition of adenosine monophosphate (AMP) or uridine monophosphate (UMP) to a protein, resulting in modifications known as AMPylation and UMPylation. This is Protein nucleotidyltransferase YdiU from Alcanivorax borkumensis (strain ATCC 700651 / DSM 11573 / NCIMB 13689 / SK2).